The primary structure comprises 355 residues: Phenylalanine--tRNA ligase alpha subunit (355 aa).

Glutamate 273 lines the Mg(2+) pocket.

The protein belongs to the class-II aminoacyl-tRNA synthetase family. Phe-tRNA synthetase alpha subunit type 1 subfamily. Tetramer of two alpha and two beta subunits. It depends on Mg(2+) as a cofactor.

The protein resides in the cytoplasm. It catalyses the reaction tRNA(Phe) + L-phenylalanine + ATP = L-phenylalanyl-tRNA(Phe) + AMP + diphosphate + H(+). This chain is Phenylalanine--tRNA ligase alpha subunit, found in Bifidobacterium adolescentis (strain ATCC 15703 / DSM 20083 / NCTC 11814 / E194a).